The following is a 390-amino-acid chain: Probable purine permease 10 (390 aa).

A run of 10 helical transmembrane segments spans residues 44–64 (WLRV…ATIL), 78–98 (LATV…ILSF), 117–137 (VLVY…YSIG), 140–160 (YLPV…NAFF), 169–189 (LTPI…LLAF), 204–224 (YVKG…VLSL), 241–261 (VMDM…VGLF), 287–307 (LVWT…LIFE), 312–332 (FSNA…VIIF), and 336–356 (MNGL…SYVY). The disordered stretch occupies residues 370 to 390 (EITTTESPDPPEAEESTWQSK).

It belongs to the purine permeases (TC 2.A.7.14) family.

The protein localises to the membrane. This chain is Probable purine permease 10 (PUP10), found in Arabidopsis thaliana (Mouse-ear cress).